We begin with the raw amino-acid sequence, 919 residues long: TRPM8 channel-associated factor 2 (919 aa).

Positions D543 to G842 constitute a Peptidase M60 domain.

The protein belongs to the TCAF family. In terms of assembly, interacts with TRPM8 (via N-terminus and C-terminus domains); the interaction inhibits TRPM8 channel activity. Interacts with TRPV6.

It is found in the cell membrane. Functionally, negatively regulates the plasma membrane cation channel TRPM8 activity. Involved in the recruitment of TRPM8 to the cell surface. Promotes prostate cancer cell migration stimulation in a TRPM8-dependent manner. This Mus musculus (Mouse) protein is TRPM8 channel-associated factor 2.